The sequence spans 630 residues: Pentatricopeptide repeat-containing protein At1g26460, mitochondrial (630 aa).

Residues 1–115 (MASHLFTRSR…RALSETLDMN (115 aa)) constitute a mitochondrion transit peptide. The disordered stretch occupies residues 42–79 (LLATESTDHDPSNHQSTSTPLPPNPATGSPLYQENWRS). The span at 67–77 (ATGSPLYQENW) shows a compositional bias: polar residues. PPR repeat units lie at residues 154 to 189 (DVNLYNHYLRANLMMGASAGDMLDLVAPMEEFSVEP), 190 to 224 (NTASYNLVLKAMYQARETEAAMKLLERMLLLGKDS), 227 to 261 (DDESYDLVIGMHFGVGKNDEAMKVMDTALKSGYML), 468 to 503 (SVAALNCIILGCANTWDLDRAYQTFEAISASFGLTP), 504 to 538 (NIDSYNALLYAFGKVKKTFEATNVFEHLVSIGVKP), and 539 to 573 (DSRTYSLLVDAHLINRDPKSALTVVDDMIKAGFEP).

This sequence belongs to the PPR family. P subfamily.

It localises to the mitochondrion. The chain is Pentatricopeptide repeat-containing protein At1g26460, mitochondrial from Arabidopsis thaliana (Mouse-ear cress).